A 235-amino-acid chain; its full sequence is Lipoprotein-releasing system ATP-binding protein LolD (235 aa).

An ABC transporter domain is found at 5 to 235; the sequence is LECRDIRKVY…LMTESASVEG (231 aa). 41 to 48 is a binding site for ATP; that stretch reads GSSGSGKS.

It belongs to the ABC transporter superfamily. Lipoprotein translocase (TC 3.A.1.125) family. As to quaternary structure, the complex is composed of two ATP-binding proteins (LolD) and two transmembrane proteins (LolC and LolE).

It is found in the cell inner membrane. Part of the ABC transporter complex LolCDE involved in the translocation of mature outer membrane-directed lipoproteins, from the inner membrane to the periplasmic chaperone, LolA. Responsible for the formation of the LolA-lipoprotein complex in an ATP-dependent manner. The chain is Lipoprotein-releasing system ATP-binding protein LolD from Vibrio parahaemolyticus serotype O3:K6 (strain RIMD 2210633).